A 220-amino-acid chain; its full sequence is Tumor protein D54 (220 aa).

M1 is modified (N-acetylmethionine). Positions 1 to 14 (MDSASQDINLNSPN) are enriched in polar residues. Residues 1–26 (MDSASQDINLNSPNKGVLSDFMTDVP) form a disordered region. Phosphoserine occurs at positions 3, 12, and 19. The stretch at 40 to 82 (GLTEVEEEELRAELAKVEEEIVTLRQVLAAKERHCGELKRRLG) forms a coiled coil. Phosphoserine occurs at positions 96, 149, 168, and 175. Phosphothreonine is present on T177. Residue S180 is modified to Phosphoserine. A Phosphothreonine modification is found at T187. The segment at 189–220 (KSKVVGGRENGSDTLPSSPGSGDQTLPDHAPF) is disordered. Residues 200 to 212 (SDTLPSSPGSGDQ) show a composition bias toward polar residues. Phosphoserine is present on residues S206 and S209.

Belongs to the TPD52 family. As to quaternary structure, forms a homodimer or heterodimer with other members of the family. Interacts with MAL2.

This Rattus norvegicus (Rat) protein is Tumor protein D54 (Tpd52l2).